The primary structure comprises 398 residues: Cystathionine gamma-lyase (398 aa).

Substrate is bound by residues Arg61, Tyr113, and Arg118. An N6-(pyridoxal phosphate)lysine modification is found at Lys211. Glu338 provides a ligand contact to substrate.

This sequence belongs to the trans-sulfuration enzymes family. As to quaternary structure, homotetramer. Interacts with CALM in a calcium-dependent manner. Pyridoxal 5'-phosphate is required as a cofactor. In terms of tissue distribution, detected in liver and kidney, and at lower levels in small intestine (at protein level). Highly expressed in liver, kidney and lung, detected at lower levels in stomach, small intestine and adipose tissue, and hardly found in heart, bone, and thymus.

The protein localises to the cytoplasm. It carries out the reaction L,L-cystathionine + H2O = 2-oxobutanoate + L-cysteine + NH4(+). The catalysed reaction is L-cysteine + H2O = hydrogen sulfide + pyruvate + NH4(+) + H(+). The enzyme catalyses L-homocysteine + H2O = 2-oxobutanoate + hydrogen sulfide + NH4(+) + H(+). It catalyses the reaction L-homoserine = 2-oxobutanoate + NH4(+). It carries out the reaction L-selenocystathionine + H2O = L-selenocysteine + 2-oxobutanoate + NH4(+). It participates in amino-acid biosynthesis; L-cysteine biosynthesis; L-cysteine from L-homocysteine and L-serine: step 2/2. Activated by calmodulin in the presence of calcium ions. In terms of biological role, catalyzes the last step in the trans-sulfuration pathway from L-methionine to L-cysteine in a pyridoxal-5'-phosphate (PLP)-dependent manner, which consists on cleaving the L,L-cystathionine molecule into L-cysteine, ammonia and 2-oxobutanoate. Part of the L-cysteine derived from the trans-sulfuration pathway is utilized for biosynthesis of the ubiquitous antioxidant glutathione. Besides its role in the conversion of L-cystathionine into L-cysteine, it utilizes L-cysteine and L-homocysteine as substrates (at much lower rates than L,L-cystathionine) to produce hydrogen sulfide (H2S). In vitro, it converts two L-cysteine molecules into lanthionine and H2S, and two L-homocysteine molecules to homolanthionine and H2S, which can be particularly relevant under conditions of severe hyperhomocysteinemia. Lanthionine and homolanthionine are structural homologs of L,L-cystathionine that differ by the absence or presence of an extra methylene group, respectively. Acts as a cysteine-protein sulfhydrase by mediating sulfhydration of target proteins: sulfhydration consists of converting -SH groups into -SSH on specific cysteine residues of target proteins such as GAPDH, PTPN1 and NF-kappa-B subunit RELA, thereby regulating their function. By generating the gasotransmitter H2S, it participates in a number of physiological processes such as vasodilation, bone protection, and inflammation. Plays an essential role in myogenesis by contributing to the biogenesis of H2S in skeletal muscle tissue. Can also accept homoserine as substrate. Catalyzes the elimination of selenocystathionine (which can be derived from the diet) to yield selenocysteine, ammonia and 2-oxobutanoate. The chain is Cystathionine gamma-lyase (Cth) from Mus musculus (Mouse).